The primary structure comprises 587 residues: Putative adenylate cyclase 3 (587 aa).

The Guanylate cyclase domain occupies A12–E127. 5 TPR repeats span residues L343–M376, P421–S454, A455–F488, L490–S522, and M524–F556.

It belongs to the adenylyl cyclase class-3 family.

It carries out the reaction ATP = 3',5'-cyclic AMP + diphosphate. The chain is Putative adenylate cyclase 3 (cya3) from Rhizobium meliloti (strain 1021) (Ensifer meliloti).